A 350-amino-acid chain; its full sequence is Zinc finger protein 367 (350 aa).

A disordered region spans residues 104 to 151 (SGLRGRGAPPPAASASAAASGGEDEEEASSPDSGHLKDGIRRGRPRAD). Residues 137–151 (GHLKDGIRRGRPRAD) show a composition bias toward basic and acidic residues. 2 C2H2-type zinc fingers span residues 167–189 (IRCNICNRVFPREKSLQAHKRTH) and 195–219 (YLCDYPDCGKAFVQSGQLKTHQRLH). Residues 290-327 (KGKLVQKADQEQQDPLEYLQSDEEDDEKRGAQRRLQEQ) form a disordered region. Residues 308 to 342 (LQSDEEDDEKRGAQRRLQEQRERLHGALALIELAN) are a coiled coil. Ser-310 is subject to Phosphoserine. The segment covering 316-327 (EKRGAQRRLQEQ) has biased composition (basic and acidic residues).

This sequence belongs to the krueppel C2H2-type zinc-finger protein family.

The protein resides in the nucleus. Its function is as follows. Transcriptional activator. Isoform 1 may be involved in transcriptional activation of erythroid genes. In Homo sapiens (Human), this protein is Zinc finger protein 367 (ZNF367).